A 304-amino-acid polypeptide reads, in one-letter code: Haloalkane dehalogenase (304 aa).

Residues 42 to 154 (PIVFLHGNPT…DSVDLSPEFV (113 aa)) form the AB hydrolase-1 domain. Asp-114 (nucleophile) is an active-site residue. The Proton donor role is filled by Glu-138. Catalysis depends on His-280, which acts as the Proton acceptor.

It belongs to the haloalkane dehalogenase family. Type 2 subfamily. In terms of assembly, monomer.

The catalysed reaction is 1-haloalkane + H2O = a halide anion + a primary alcohol + H(+). Functionally, catalyzes hydrolytic cleavage of carbon-halogen bonds in halogenated aliphatic compounds, leading to the formation of the corresponding primary alcohols, halide ions and protons. The polypeptide is Haloalkane dehalogenase (Agrobacterium fabrum (strain C58 / ATCC 33970) (Agrobacterium tumefaciens (strain C58))).